The sequence spans 126 residues: E3 ubiquitin-protein ligase PPP1R11 (126 aa).

The tract at residues 1 to 25 (MAEAGAGLSETVTETTVTVTTEPEN) is disordered. Position 2 is an N-acetylalanine (alanine 2). A compositionally biased stretch (low complexity) spans 10–22 (ETVTETTVTVTTE). Residues 52 to 62 (HMGRRSSKCCC) form an atypical RING finger domain 1 region. The tract at residues 70–126 (FGESSTESDEEEEEGCGHTHCVRGHRKGRRRATLGPTPTTPPQPPDPSQPPPGPMQH) is disordered. Phosphoserine is present on residues serine 73 and serine 74. Threonine 75 is modified (phosphothreonine). The residue at position 77 (serine 77) is a Phosphoserine. Residues 85–94 (CGHTHCVRGH) are atypical RING finger domain 2. Residues 89-101 (HCVRGHRKGRRRA) show a composition bias toward basic residues. The segment covering 107–126 (PTTPPQPPDPSQPPPGPMQH) has biased composition (pro residues). The residue at position 109 (threonine 109) is a Phosphothreonine.

As to quaternary structure, interacts with TLR2 and UBE2D2. Post-translationally, auto-ubiquitinated. As to expression, widely expressed.

It catalyses the reaction S-ubiquitinyl-[E2 ubiquitin-conjugating enzyme]-L-cysteine + [acceptor protein]-L-lysine = [E2 ubiquitin-conjugating enzyme]-L-cysteine + N(6)-ubiquitinyl-[acceptor protein]-L-lysine.. It functions in the pathway protein modification; protein ubiquitination. Its function is as follows. Atypical E3 ubiquitin-protein ligase which ubiquitinates TLR2 at 'Lys-754' leading to its degradation by the proteasome. Plays a role in regulating inflammatory cytokine release and gram-positive bacterial clearance by functioning, in part, through the ubiquitination and degradation of TLR2. Inhibitor of protein phosphatase 1. The polypeptide is E3 ubiquitin-protein ligase PPP1R11 (PPP1R11) (Homo sapiens (Human)).